We begin with the raw amino-acid sequence, 420 residues long: Dihydrolipoyllysine-residue succinyltransferase component of 2-oxoglutarate dehydrogenase complex (420 aa).

The Lipoyl-binding domain maps to 3–78; that stretch reads KINILVPDLP…ISQQTLGEIN (76 aa). An N6-lipoyllysine modification is found at Lys-44. Active-site residues include His-391 and Asp-395.

This sequence belongs to the 2-oxoacid dehydrogenase family. Forms a 24-polypeptide structural core with octahedral symmetry. Part of the 2-oxoglutarate dehydrogenase (OGDH) complex composed of E1 (2-oxoglutarate dehydrogenase), E2 (dihydrolipoamide succinyltransferase) and E3 (dihydrolipoamide dehydrogenase); the complex contains multiple copies of the three enzymatic components (E1, E2 and E3). (R)-lipoate serves as cofactor.

It catalyses the reaction N(6)-[(R)-dihydrolipoyl]-L-lysyl-[protein] + succinyl-CoA = N(6)-[(R)-S(8)-succinyldihydrolipoyl]-L-lysyl-[protein] + CoA. It functions in the pathway amino-acid degradation; L-lysine degradation via saccharopine pathway; glutaryl-CoA from L-lysine: step 6/6. Functionally, E2 component of the 2-oxoglutarate dehydrogenase (OGDH) complex which catalyzes the second step in the conversion of 2-oxoglutarate to succinyl-CoA and CO(2). The polypeptide is Dihydrolipoyllysine-residue succinyltransferase component of 2-oxoglutarate dehydrogenase complex (sucB) (Buchnera aphidicola subsp. Acyrthosiphon pisum (strain APS) (Acyrthosiphon pisum symbiotic bacterium)).